Reading from the N-terminus, the 4158-residue chain is Dynein axonemal heavy chain 6 (4158 aa).

Residues 1–1433 (MTFRATDSEF…VARMALSQYT (1433 aa)) form a stem region. Residue 192–199 (IIRENEHL) coordinates ATP. Positions 805–859 (CVHLGSDLEELNNEVNEVKLQAQDPQILDISADQDKIRLILNNLQSVLADLQKRA) form a coiled coil. AAA stretches follow at residues 1434–1655 (YGYE…VLVM), 1715–1948 (STIV…KKCS), 2058–2306 (KYNR…CVQG), and 2408–2659 (DYNL…LRRR). Residues 1472 to 1479 (GPAGTGKT), 1753 to 1760 (GPTGGGKT), 2096 to 2103 (GITGVGKS), and 2447 to 2454 (GVGGTGKQ) each bind ATP. Positions 2676–2961 (SMLSEKRKQI…KTMALTKARL (286 aa)) are stalk. Residues 2901-2996 (KRQKLRAAQA…EEISNITGNV (96 aa)) are a coiled coil. AAA stretches follow at residues 3042 to 3272 (LGDP…AIKT) and 3509 to 3730 (LTDF…NLKL).

It belongs to the dynein heavy chain family. As to quaternary structure, the dynein complex consists of at least two heavy chains and a number of intermediate and light chains. In terms of tissue distribution, expressed in several tissues, including brain, pituitary, testis and trachea, with highest levels in testis.

The protein resides in the cytoplasm. It localises to the cytoskeleton. Its subcellular location is the cilium axoneme. Its function is as follows. Force generating protein of respiratory cilia. Produces force towards the minus ends of microtubules. Dynein has ATPase activity; the force-producing power stroke is thought to occur on release of ADP. The sequence is that of Dynein axonemal heavy chain 6 from Homo sapiens (Human).